The primary structure comprises 785 residues: MNNKILKILEFGEITDRLGALAITSPAKERAEKLLPSSDFDQVQNDIKQTLALTNLLRIKGQLPLTNFKDVRPSTKRLGVKANLNAQELGNLLLVLSLAQEINEFLEDVDEKVDLTIIDPILDQLDVPDLLFRELKKSIDYDGEVLDTASSELARLRHDIASNEEDIKNRMTTYTKGNSSKYLSEQIVTIRDDRYVIPVKQEYRAKFGGVVHDQSASGQTLFVEPEAVLNLNNRQQNLIAKEKQEIRNILKHLSNIAREDIDSLNNIASALTSLDFLQAKAKLAKEMKASEPKLTKDHSLNLRNARHPLINPEKVVPNNIRLGGDFDTMLITGPNTGGKTITLKTAGLLQLMAQSGLFIPAEEDSQVGVFEQIYADIGDEQSIEQSLSTFSSHMNDIIAIMKNVNSETLVLIDEIGAGTDPEEGASLAISILDFLRKKDAKIMVTTHYPELKLYGYNRPRTTNASMEFDLKTLSPTYRLQIGIPGHSNAFAIARRLGMREDVVKNAQELMSDEDSDINKMIAKLNAQTKAATTARNRLETSLDRSQKLEQKLQQALDWYNQRVQKQLDFAQERANEIIAKRRKKADKIIEQLEQQKNVGIKENKIIEAKGELNSLERQANNLAHNKVLQREKRRHHVSIGDRVKVLSYGQTGTITKQLSEHEYEVQMGIIKVKVSDRDVERIDNSQSTAKPKRLVRATSAVRRSNAHSELDLRGQRYDEAMTNLDRYIDSVLLAGLDTVTIIHGIGTGAIRKGVWQYLRSSNHVKNFNYAPANEGGNGATIVQLK.

An ATP-binding site is contributed by 333–340 (GPNTGGKT). The region spanning 710–785 (LDLRGQRYDE…GNGATIVQLK (76 aa)) is the Smr domain.

The protein belongs to the DNA mismatch repair MutS family. MutS2 subfamily. In terms of assembly, homodimer. Binds to stalled ribosomes, contacting rRNA.

In terms of biological role, endonuclease that is involved in the suppression of homologous recombination and thus may have a key role in the control of bacterial genetic diversity. Its function is as follows. Acts as a ribosome collision sensor, splitting the ribosome into its 2 subunits. Detects stalled/collided 70S ribosomes which it binds and splits by an ATP-hydrolysis driven conformational change. Acts upstream of the ribosome quality control system (RQC), a ribosome-associated complex that mediates the extraction of incompletely synthesized nascent chains from stalled ribosomes and their subsequent degradation. Probably generates substrates for RQC. The polypeptide is Endonuclease MutS2 (Lactobacillus acidophilus (strain ATCC 700396 / NCK56 / N2 / NCFM)).